A 398-amino-acid polypeptide reads, in one-letter code: Alpha-(1,3)-fucosyltransferase 4 (398 aa).

Over 1-15 the chain is Cytoplasmic; that stretch reads MRARWGRRGARRGGP. Residues 16 to 40 form a helical; Signal-anchor for type II membrane protein membrane-spanning segment; it reads GLPGTHLALLAASLLSSSVAIYVCW. Residues 41–398 are Lumenal-facing; that stretch reads KQLPPLPWAS…VPNLAGWFQQ (358 aa). Residues asparagine 84, asparagine 183, and asparagine 311 are each glycosylated (N-linked (GlcNAc...) asparagine).

This sequence belongs to the glycosyltransferase 10 family.

Its subcellular location is the golgi apparatus. The protein localises to the golgi stack membrane. It carries out the reaction a beta-D-galactosyl-(1-&gt;4)-N-acetyl-beta-D-glucosaminyl derivative + GDP-beta-L-fucose = a beta-D-galactosyl-(1-&gt;4)-[alpha-L-fucosyl-(1-&gt;3)]-N-acetyl-beta-D-glucosaminyl derivative + GDP + H(+). The catalysed reaction is an N-acetyl-alpha-neuraminyl-(2-&gt;3)-beta-D-galactosyl-(1-&gt;4)-N-acetyl-beta-D-glucosaminyl derivative + GDP-beta-L-fucose = an alpha-Neu5Ac-(2-&gt;3)-beta-D-Gal-(1-&gt;4)-[alpha-L-Fuc-(1-&gt;3)]-beta-D-GlcNAc derivative + GDP + H(+). It catalyses the reaction an alpha-Neu5Ac-(2-&gt;3)-beta-D-Gal-(1-&gt;4)-beta-D-GlcNAc-(1-&gt;3)-beta-D-Gal-(1-&gt;4)-beta-D-GlcNAc derivative + GDP-beta-L-fucose = an alpha-Neu5Ac-(2-&gt;3)-beta-D-Gal-(1-&gt;4)-beta-D-GlcNAc-(1-&gt;3)-beta-D-Gal-(1-&gt;4)-[alpha-L-Fuc-(1-&gt;3)]-beta-D-GlcNAc derivative + GDP + H(+). The enzyme catalyses an alpha-Neu5Ac-(2-&gt;3)-beta-D-Gal-(1-&gt;4)-beta-D-GlcNAc6S derivative + GDP-beta-L-fucose = an alpha-Neu5Ac-(2-&gt;3)-beta-D-Gal-(1-&gt;4)-[alpha-L-Fuc-(1-&gt;3)]-beta-D-GlcNAc6S derivative + GDP + H(+). Its pathway is protein modification; protein glycosylation. Its function is as follows. Catalyzes alpha(1-&gt;3) linkage of fucosyl moiety transferred from GDP-beta-L-fucose to N-acetyl glucosamine (GlcNAc) within type 2 lactosamine (LacNAc, Gal-beta(1-&gt;4)GlcNAc) glycan attached to N- or O-linked glycoproteins. Robustly fucosylates nonsialylated distal LacNAc unit of the polylactosamine chain to form Lewis X antigen (CD15), a glycan determinant known to mediate important cellular functions in development and immunity. Fucosylates with lower efficiency sialylated LacNAc acceptors to form sialyl Lewis X and 6-sulfo sialyl Lewis X determinants that serve as recognition epitopes for C-type lectins. Together with FUT7 contributes to SELE, SELL and SELP selectin ligand biosynthesis and selectin-dependent lymphocyte homing, leukocyte migration and blood leukocyte homeostasis. In a cell type specific manner, may also fucosylate the internal LacNAc unit of the polylactosamine chain to form VIM-2 antigen that serves as recognition epitope for SELE. The protein is Alpha-(1,3)-fucosyltransferase 4 (FUT4) of Bos taurus (Bovine).